The chain runs to 543 residues: Probable protein kinase UbiB (543 aa).

Residues 123–500 (DFDQQPLASA…HRRHAQARFL (378 aa)) form the Protein kinase domain. ATP-binding positions include 129–137 (LASASVAQV) and Lys-152. Asp-286 serves as the catalytic Proton acceptor. 2 helical membrane passes run 499 to 519 (FLLGAGATLLLGSILLLPTHE) and 521 to 541 (LASAGLTISIICWLNGWWKIS).

Belongs to the ABC1 family. UbiB subfamily.

It is found in the cell inner membrane. The protein operates within cofactor biosynthesis; ubiquinone biosynthesis [regulation]. Functionally, is probably a protein kinase regulator of UbiI activity which is involved in aerobic coenzyme Q (ubiquinone) biosynthesis. The chain is Probable protein kinase UbiB from Tolumonas auensis (strain DSM 9187 / NBRC 110442 / TA 4).